The following is a 678-amino-acid chain: MTKNLLVELGLEELPAYVVTPSEKQLGEKMAAFLKGKRLSFEAIQTFSTPRRLAVRVTGLSDKQSDLTEDFKGPAKKIALDSDGNFTKAAQGFVRGKGLTVEDIEFREIKGEEYVYVTKEEIGQAVEAIVPGIVDVLKSLTFPVSMHWAGNSFEYIRPVHTLTVLLDEQEFDLDFLDIKGSRVSRGHRFLGKETKIQSALSYEEDLRKQFVIADPCEREQMIVDQIKEIEAKHDVRIEIDADLLNEVLNLVEYPTAFMGSFDAKYLEVPEEVLVTSMKEHQRYFVVRDQDGKLLPNFISVRNGNAERLKNVIKGNEKVLVARLEDGEFFWREDQKLVISDLVEKLNNVTFHEKIGSLREHMIRTGQITVLLAEKADLSVDETVDLARAAAIYKFDLLTGMVGEFDELQGIMGEKYTLLAGETPAVAAAIREHYMPTSAEGELPESKVGAVLAIADKLDTILSFFSVGLIPSGSNDPYALRRATQGVVRILDAFGWHIAMDELIDSLYALKFDSLTYENKAEVMDFIKARVDKMMGSTPKDIKEAVLAGSNFVVADMLEAASALVEVSKEEDFKPSVESLSRAFNLAEKAEGVATVDSALFENDQEKALAEAVETLVLSGPASQQLKQLFALSPVIDAFFENTMVMAEDQAVRQNRLAILSQLTKKAAKFACFNQINTK.

It belongs to the class-II aminoacyl-tRNA synthetase family. Tetramer of two alpha and two beta subunits.

The protein resides in the cytoplasm. It carries out the reaction tRNA(Gly) + glycine + ATP = glycyl-tRNA(Gly) + AMP + diphosphate. The sequence is that of Glycine--tRNA ligase beta subunit from Streptococcus pneumoniae (strain 70585).